A 402-amino-acid chain; its full sequence is 26S proteasome non-ATPase regulatory subunit 4 homolog (402 aa).

The VWFA domain maps to 5–189 (ATMICIDNSE…LSDVLISTPI (185 aa)). Positions 221-240 (NVDPELALALRLSMEEERAR) constitute a UIM 1 domain. Residues 241 to 261 (QEAIAKKAAEESSGAENKDHA) are compositionally biased toward basic and acidic residues. 2 disordered regions span residues 241–292 (QEAI…EDDD) and 302–321 (MSME…MAEA). UIM domains follow at residues 291-310 (DDAQ…GSSG) and 323-342 (VDDQ…AGGS). The tract at residues 363–402 (SLPGVDPNDPSVKDLLASLHGQGEQEKKEDKSDKPEDEKK) is disordered. Residues 385-402 (GEQEKKEDKSDKPEDEKK) are compositionally biased toward basic and acidic residues.

Belongs to the proteasome subunit S5A family. Component of the 19S regulatory particle (RP/PA700) base subcomplex of the 26S proteasome. The 26S proteasome is composed of a core protease (CP), known as the 20S proteasome, capped at one or both ends by the 19S regulatory particle (RP/PA700). The RP/PA700 complex is composed of at least 17 different subunits in two subcomplexes, the base and the lid, which form the portions proximal and distal to the 20S proteolytic core, respectively. Interacts with PI4KG4.

Its function is as follows. Plays a role in maintaining the structural integrity of the 19S regulatory particle (RP), subcomplex of the 26S proteasome. Plays a major role in both the direct and indirect recognition of ubiquitinated substrates of ubiquitin/26S proteasome-mediated proteolysis (UPP). Binds and presumably selects ubiquitin-conjugates for destruction. The chain is 26S proteasome non-ATPase regulatory subunit 4 homolog from Oryza sativa subsp. japonica (Rice).